The following is a 448-amino-acid chain: D-inositol 3-phosphate glycosyltransferase (448 aa).

The segment at 1 to 21 (MAEQHTGVGRQRGARPWPRPR) is disordered. 1D-myo-inositol 3-phosphate is bound at residue His29. UDP-N-acetyl-alpha-D-glucosamine is bound by residues 35-36 (QP) and Gly43. Residues 40–45 (DAGGMN), Lys98, Tyr131, Thr155, and Arg175 contribute to the 1D-myo-inositol 3-phosphate site. Residues Arg255, Lys260, and Gln321 each contribute to the UDP-N-acetyl-alpha-D-glucosamine site. Residues Tyr330, Arg331, and Ala333 each contribute to the Mg(2+) site. 2 residues coordinate UDP-N-acetyl-alpha-D-glucosamine: Glu343 and Glu351. Thr357 serves as a coordination point for Mg(2+).

It belongs to the glycosyltransferase group 1 family. MshA subfamily. As to quaternary structure, homodimer.

The enzyme catalyses 1D-myo-inositol 3-phosphate + UDP-N-acetyl-alpha-D-glucosamine = 1D-myo-inositol 2-acetamido-2-deoxy-alpha-D-glucopyranoside 3-phosphate + UDP + H(+). Functionally, catalyzes the transfer of a N-acetyl-glucosamine moiety to 1D-myo-inositol 3-phosphate to produce 1D-myo-inositol 2-acetamido-2-deoxy-glucopyranoside 3-phosphate in the mycothiol biosynthesis pathway. The polypeptide is D-inositol 3-phosphate glycosyltransferase (Salinispora arenicola (strain CNS-205)).